Reading from the N-terminus, the 298-residue chain is Syntaxin-4 (298 aa).

The Cytoplasmic segment spans residues 1 to 274 (MRDRTHELRQ…NQKKARKKKV (274 aa)). 7 positions are modified to phosphoserine: serine 15, serine 29, serine 35, serine 36, serine 117, serine 208, and serine 248. A coiled-coil region spans residues 38 to 163 (DDEFFQKVQT…ERIRRQLKIT (126 aa)). Residues 154 to 298 (ERIRRQLKIT…VIIGITITVG (145 aa)) are interaction with CENPF. A t-SNARE coiled-coil homology domain is found at 200 to 262 (LNEISARHSE…ERGQEHVKIA (63 aa)). The chain crosses the membrane as a helical; Anchor for type IV membrane protein span at residues 275–295 (MIAICVSVTVLILAVIIGITI). At 296-298 (TVG) the chain is on the extracellular side.

Belongs to the syntaxin family. Found in a complex with VAMP8 and SNAP23. Detected in a complex with SNAP23 and STXBP4. Interacts with SNAP23 and SNAPIN. Interacts with VAMP2. Interacts with LLGL1. Interacts (via C-terminus) with CENPF. Interacts with DOC2B. Interacts with STXBP3; excludes interaction with DOC2B and SNAP25. Interacts with STXBP4; excludes interaction with VAMP2. Component of the SNARE complex composed of STX4, SNAP23 and VAMP7 that interacts with SYT7 during lysosomal exocytosis. Interacts with STXBP6. Interacts with STXBP5L. Expressed in all tissues tested including adipose, brain, testis, intestine, liver, heart, spleen, skeletal muscle and kidney.

Its subcellular location is the cell membrane. The protein resides in the cell projection. It is found in the neuron projection. It localises to the stereocilium. Plasma membrane t-SNARE that mediates docking of transport vesicles. Necessary for the translocation of SLC2A4 from intracellular vesicles to the plasma membrane. In neurons, recruited at neurite tips to membrane domains rich in the phospholipid 1-oleoyl-2-palmitoyl-PC (OPPC) which promotes neurite tip surface expression of the dopamine transporter SLC6A3/DAT by facilitating fusion of SLC6A3-containing transport vesicles with the plasma membrane. Together with STXB3 and VAMP2, may also play a role in docking/fusion of intracellular GLUT4-containing vesicles with the cell surface in adipocytes and in docking of synaptic vesicles at presynaptic active zones. Required for normal hearing. The polypeptide is Syntaxin-4 (Stx4) (Rattus norvegicus (Rat)).